We begin with the raw amino-acid sequence, 453 residues long: Protein FAM117A (453 aa).

Over residues 1-25 (MAGAAAGGRGGGAWGPGRGGAGGLR) the composition is skewed to gly residues. Residues 1 to 45 (MAGAAAGGRGGGAWGPGRGGAGGLRRGCSPPAPAGSPRAGLQPLR) form a disordered region. Phosphoserine occurs at positions 29 and 67. Residues 149–175 (TDHRKEISKLKQQLQRTKLSRSGKEKE) are a coiled coil. The tract at residues 159–201 (KQQLQRTKLSRSGKEKERGSPLLGDHAVRGALRASPPSFPSGS) is disordered. Ser178, Ser193, Ser201, and Ser213 each carry phosphoserine. The span at 269-278 (SSPSMSLASP) shows a compositional bias: low complexity. The disordered stretch occupies residues 269-320 (SSPSMSLASPQPCGLASHEEHRGAAEELASTPNDKASSPGHPAFLEDGSPSP). Phosphothreonine is present on Thr299. Phosphoserine occurs at positions 319 and 327. Thr354 is modified (phosphothreonine). Pro residues predominate over residues 406-416 (GSPLPPASPRP). Residues 406 to 453 (GSPLPPASPRPPPRKDPEASKASPLPFEPWQRTPPSEEPVLFQSSLMV) form a disordered region. Residues Ser413 and Ser428 each carry the phosphoserine modification.

This sequence belongs to the FAM117 family.

The sequence is that of Protein FAM117A (FAM117A) from Homo sapiens (Human).